Reading from the N-terminus, the 114-residue chain is Protein S100-A9 (114 aa).

Threonine 2 is subject to Blocked amino end (Thr). Cysteine 3 bears the S-nitrosocysteine; transient mark. EF-hand domains lie at 12-47 and 54-89; these read IETI…DLQN and KNEK…LTWA. Residue histidine 20 coordinates Zn(2+). Residues serine 23, leucine 26, and histidine 28 each contribute to the Ca(2+) site. Zn(2+) is bound at residue aspartate 30. Ca(2+) contacts are provided by threonine 31, glutamate 36, aspartate 67, asparagine 69, aspartate 71, glutamine 73, and glutamate 78. Zn(2+) contacts are provided by histidine 91 and histidine 95. Basic and acidic residues predominate over residues 93-102; sequence KMHEGDEGPG. Residues 93–114 are disordered; that stretch reads KMHEGDEGPGHHHKPGLGEGTP. Pros-methylhistidine is present on histidine 105. Threonine 113 carries the phosphothreonine; by MAPK14 modification.

Homodimer. Preferentially exists as a heterodimer or heterotetramer with S100A8 known as calprotectin (S100A8/A9). S100A9 interacts with ATP2A2. S100A9 interacts with AGER, and with the heterodimeric complex formed by TLR4 and LY96 in the presence of calcium and/or zinc ions. S100A9 binds quinoline-3-carboxamides in the presence of calcium and/or zinc ions. S100A9 interacts with amyloid-beta protein 40. Calprotectin (S100A8/9) interacts with CEACAM3 and tubulin filaments in a calcium-dependent manner. Heterotetrameric calprotectin (S100A8/A9) interacts with ANXA6 and associates with tubulin filaments in activated monocytes. Calprotectin (S100A8/9) interacts with NCF2/P67PHOX, RAC1, RAC2, CYBA and CYBB. Calprotectin (S100A8/9) interacts with NOS2 to form the iNOS-S100A8/A9 transnitrosylase complex; induced by LDL(ox). Calprotectin (S100A8/9) interacts with CD69. Phosphorylated. Phosphorylation inhibits activation of tubulin polymerization. Post-translationally, S-nitrosylation of Cys-3 is implicated in LDL(ox)-induced S-nitrosylation of GAPDH at 'Cys-247' through a transnitrosylase mechanism involving a iNOS-S100A8/9 complex. In terms of processing, methylation at His-105 by METTL9 reduces zinc-binding without affecting heterodimerization with S100A8. Calprotectin (S100A8/9) is predominantly expressed in myeloid cells. Except for inflammatory conditions, the expression is restricted to a specific stage of myeloid differentiation since both proteins are expressed in circulating neutrophils and monocytes but are absent in normal tissue macrophages and lymphocytes. Under chronic inflammatory conditions, such as psoriasis and malignant disorders, also expressed in the epidermis. Found in high concentrations at local sites of inflammation or in the serum of patients with inflammatory diseases such as rheumatoid, cystic fibrosis, inflammatory bowel disease, Crohn's disease, giant cell arteritis, cystic fibrosis, Sjogren's syndrome, systemic lupus erythematosus, and progressive systemic sclerosis. Involved in the formation and deposition of amyloids in the aging prostate known as corpora amylacea inclusions. Strongly up-regulated in many tumors, including gastric, esophageal, colon, pancreatic, bladder, ovarian, thyroid, breast and skin cancers.

It is found in the secreted. The protein localises to the cytoplasm. The protein resides in the cytoskeleton. It localises to the cell membrane. In terms of biological role, S100A9 is a calcium- and zinc-binding protein which plays a prominent role in the regulation of inflammatory processes and immune response. It can induce neutrophil chemotaxis, adhesion, can increase the bactericidal activity of neutrophils by promoting phagocytosis via activation of SYK, PI3K/AKT, and ERK1/2 and can induce degranulation of neutrophils by a MAPK-dependent mechanism. Predominantly found as calprotectin (S100A8/A9) which has a wide plethora of intra- and extracellular functions. The intracellular functions include: facilitating leukocyte arachidonic acid trafficking and metabolism, modulation of the tubulin-dependent cytoskeleton during migration of phagocytes and activation of the neutrophilic NADPH-oxidase. Also participates in regulatory T-cell differentiation together with CD69. Activates NADPH-oxidase by facilitating the enzyme complex assembly at the cell membrane, transferring arachidonic acid, an essential cofactor, to the enzyme complex and S100A8 contributes to the enzyme assembly by directly binding to NCF2/P67PHOX. The extracellular functions involve pro-inflammatory, antimicrobial, oxidant-scavenging and apoptosis-inducing activities. Its pro-inflammatory activity includes recruitment of leukocytes, promotion of cytokine and chemokine production, and regulation of leukocyte adhesion and migration. Acts as an alarmin or a danger associated molecular pattern (DAMP) molecule and stimulates innate immune cells via binding to pattern recognition receptors such as Toll-like receptor 4 (TLR4) and receptor for advanced glycation endproducts (AGER). Binding to TLR4 and AGER activates the MAP-kinase and NF-kappa-B signaling pathways resulting in the amplification of the pro-inflammatory cascade. Has antimicrobial activity towards bacteria and fungi and exerts its antimicrobial activity probably via chelation of Zn(2+) which is essential for microbial growth. Can induce cell death via autophagy and apoptosis and this occurs through the cross-talk of mitochondria and lysosomes via reactive oxygen species (ROS) and the process involves BNIP3. Can regulate neutrophil number and apoptosis by an anti-apoptotic effect; regulates cell survival via ITGAM/ITGB and TLR4 and a signaling mechanism involving MEK-ERK. Its role as an oxidant scavenger has a protective role in preventing exaggerated tissue damage by scavenging oxidants. Can act as a potent amplifier of inflammation in autoimmunity as well as in cancer development and tumor spread. Has transnitrosylase activity; in oxidatively-modified low-densitity lipoprotein (LDL(ox))-induced S-nitrosylation of GAPDH on 'Cys-247' proposed to transfer the NO moiety from NOS2/iNOS to GAPDH via its own S-nitrosylated Cys-3. The iNOS-S100A8/A9 transnitrosylase complex is proposed to also direct selective inflammatory stimulus-dependent S-nitrosylation of multiple targets such as ANXA5, EZR, MSN and VIM by recognizing a [IL]-x-C-x-x-[DE] motif. The chain is Protein S100-A9 from Homo sapiens (Human).